We begin with the raw amino-acid sequence, 478 residues long: Lipoprotein lipase (478 aa).

The N-terminal stretch at 1 to 28 (MESKALLLLALSVCLQSLTVSRGGLVAA) is a signal peptide. The tract at residues 35–56 (KDFRDIESKFALRTPEDTAEDT) is interaction with GPIHBP1. Residues Cys-57 and Cys-70 are joined by a disulfide bond. Asn-73 is a glycosylation site (N-linked (GlcNAc...) asparagine). Tyr-124 bears the 3'-nitrotyrosine mark. The active-site Nucleophile is Ser-162. Asp-186 serves as the catalytic Charge relay system. 3'-nitrotyrosine is present on Tyr-194. The Ca(2+) site is built by Ala-197, Arg-200, Ser-202, and Asp-205. A disulfide bridge links Cys-246 with Cys-269. Positions 246 to 269 (CNIGEALRVIAERGLGDVDQLVKC) are essential for determining substrate specificity. The Charge relay system role is filled by His-271. N-linked (GlcNAc...) asparagine glycosylation is present at Asn-287. 2 disulfides stabilise this stretch: Cys-294–Cys-313 and Cys-305–Cys-308. The 124-residue stretch at 344-467 (FHYQVKIHFS…KGKSPVIFVK (124 aa)) folds into the PLAT domain. Position 346 is a 3'-nitrotyrosine (Tyr-346). Residue Asn-389 is glycosylated (N-linked (GlcNAc...) asparagine). Residues 420 to 424 (WSNWW) are important for interaction with lipoprotein particles. The tract at residues 433 to 437 (KIRVK) is important for heparin binding. The tract at residues 446–470 (IFCSREKMSYLQKGKSPVIFVKCHD) is interaction with GPIHBP1. Cys-448 and Cys-468 are oxidised to a cystine.

The protein belongs to the AB hydrolase superfamily. Lipase family. As to quaternary structure, homodimer. Interacts with GPIHBP1 with 1:1 stoichiometry. Interacts with APOC2; the interaction activates LPL activity in the presence of lipids. Interaction with heparan sulfate proteoglycans is required to protect LPL against loss of activity. Associates with lipoprotein particles in blood plasma. Interacts with LMF1 and SEL1L; interaction with SEL1L is required to prevent aggregation of newly synthesized LPL in the endoplasmic reticulum (ER), and for normal export of LPL from the ER to the extracellular space. Interacts with SORL1; SORL1 acts as a sorting receptor, promoting LPL localization to endosomes and later to lysosomes, leading to degradation of newly synthesized LPL. Tyrosine nitration after lipopolysaccharide (LPS) challenge down-regulates the lipase activity. Detected in milk (at protein level).

It localises to the cell membrane. The protein resides in the secreted. The protein localises to the extracellular space. It is found in the extracellular matrix. The catalysed reaction is a triacylglycerol + H2O = a diacylglycerol + a fatty acid + H(+). The enzyme catalyses a 1,2-diacyl-sn-glycero-3-phosphocholine + H2O = a 2-acyl-sn-glycero-3-phosphocholine + a fatty acid + H(+). It carries out the reaction 1,2,3-tri-(9Z-octadecenoyl)-glycerol + H2O = di-(9Z)-octadecenoylglycerol + (9Z)-octadecenoate + H(+). It catalyses the reaction 1,2-di-(9Z-octadecenoyl)-sn-glycero-3-phosphocholine + H2O = (9Z-octadecenoyl)-sn-glycero-3-phosphocholine + (9Z)-octadecenoate + H(+). The catalysed reaction is 1,2,3-tributanoylglycerol + H2O = dibutanoylglycerol + butanoate + H(+). The enzyme catalyses 1,2-dihexadecanoyl-sn-glycero-3-phosphocholine + H2O = hexadecanoyl-sn-glycero-3-phosphocholine + hexadecanoate + H(+). With respect to regulation, the apolipoprotein APOC2 acts as a coactivator of LPL activity. Ca(2+) binding promotes protein stability and formation of the active homodimer. Interaction with GPIHBP1 protects LPL against inactivation by ANGPTL4. Its function is as follows. Key enzyme in triglyceride metabolism. Catalyzes the hydrolysis of triglycerides from circulating chylomicrons and very low density lipoproteins (VLDL), and thereby plays an important role in lipid clearance from the blood stream, lipid utilization and storage. Although it has both phospholipase and triglyceride lipase activities it is primarily a triglyceride lipase with low but detectable phospholipase activity. Mediates margination of triglyceride-rich lipoprotein particles in capillaries. Recruited to its site of action on the luminal surface of vascular endothelium by binding to GPIHBP1 and cell surface heparan sulfate proteoglycans. The chain is Lipoprotein lipase (LPL) from Bos taurus (Bovine).